A 333-amino-acid polypeptide reads, in one-letter code: MSPITLDLTSDFNPANTTGAGSSSSQPRTLLVAPPSVASHEERISALFSTYPRDTTDLHMLDRLAAGLVTLPTSTYDLILVLTDPDGSRHAEASALLSNRAVWSLLVPALKAGGKLRSEDGTLGRDTTTPEAREAVLAGLVAGADGFTKPDYAEEEAVPLRFGLKRKTNPNPVVAPIQPVAQVVTAAPAGVGFVTLDLNDDLDLDGEDDDDDVIDEDTLLTEADLRRPIQQPPECQPKPGKKRRACKDCTCGLAERLEAEDKARRDKADQALNTLKLKSEDLLELDLTVPGKTGSCGSCALGDAFRCAGCPYLGLPPFKVGEEVSILNNVPQL.

The segment at 1-29 is disordered; the sequence is MSPITLDLTSDFNPANTTGAGSSSSQPRT. Over residues 7–28 the composition is skewed to polar residues; the sequence is DLTSDFNPANTTGAGSSSSQPR. The N-terminal SAM-like domain stretch occupies residues 23–158; that stretch reads SSSQPRTLLV…KPDYAEEEAV (136 aa). The tract at residues 159–225 is linker; sequence PLRFGLKRKT…EDTLLTEADL (67 aa). Cysteine 235, cysteine 246, cysteine 249, and cysteine 251 together coordinate [2Fe-2S] cluster. The interval 235 to 251 is fe-S binding site A; that stretch reads CQPKPGKKRRACKDCTC. [4Fe-4S] cluster is bound by residues cysteine 296, cysteine 299, cysteine 307, and cysteine 310. 2 short sequence motifs (cx2C motif) span residues 296–299 and 307–310; these read CGSC and CAGC. Residues 296–310 are fe-S binding site B; it reads CGSCALGDAFRCAGC.

It belongs to the anamorsin family. In terms of assembly, monomer. Interacts with tah18. Interacts with mia40. It depends on [2Fe-2S] cluster as a cofactor. The cofactor is [4Fe-4S] cluster.

The protein localises to the cytoplasm. It localises to the mitochondrion intermembrane space. In terms of biological role, component of the cytosolic iron-sulfur (Fe-S) protein assembly (CIA) machinery required for the maturation of extramitochondrial Fe-S proteins. Part of an electron transfer chain functioning in an early step of cytosolic Fe-S biogenesis, facilitating the de novo assembly of a [4Fe-4S] cluster on the scaffold complex cfd1-nbp35. Electrons are transferred to dre2 from NADPH via the FAD- and FMN-containing protein tah18. Tah18-dre2 are also required for the assembly of the diferric tyrosyl radical cofactor of ribonucleotide reductase (RNR), probably by providing electrons for reduction during radical cofactor maturation in the catalytic small subunit rnr2. This Neurospora crassa (strain ATCC 24698 / 74-OR23-1A / CBS 708.71 / DSM 1257 / FGSC 987) protein is Fe-S cluster assembly protein dre2.